The sequence spans 187 residues: uncharacterized protein (187 aa).

The first 28 residues, Met-1–Thr-28, serve as a signal peptide directing secretion. N-linked (GlcNAc...) asparagine glycans are attached at residues Asn-58, Asn-70, Asn-156, and Asn-168.

The protein resides in the secreted. This is an uncharacterized protein from Caenorhabditis elegans.